A 389-amino-acid polypeptide reads, in one-letter code: Mitochondrial tRNA-specific 2-thiouridylase 1 (389 aa).

Residues 8-15 (GVSGGVDS) and Met34 contribute to the ATP site. The segment at 94-96 (NPD) is interaction with target base in tRNA. The active-site Nucleophile is Cys99. Cysteines 99 and 205 form a disulfide. Gly124 lines the ATP pocket. Positions 154–156 (KDQ) are interaction with tRNA. Residue Cys205 is the Cysteine persulfide intermediate of the active site. Positions 317-318 (QH) are interaction with tRNA.

Belongs to the MnmA/TRMU family.

It is found in the mitochondrion. It carries out the reaction 5-taurinomethyluridine(34) in tRNA + S-sulfanyl-L-cysteinyl-[protein] + AH2 + ATP = 5-taurinomethyl-2-thiouridine(34) in tRNA + L-cysteinyl-[protein] + A + AMP + diphosphate + H(+). Functionally, catalyzes the 2-thiolation of uridine at the wobble position (U34) of mitochondrial tRNA(Lys), tRNA(Glu) and tRNA(Gln). Required for the formation of 5-taurinomethyl-2-thiouridine (tm5s2U) of mitochondrial tRNA(Lys), tRNA(Glu), and tRNA(Gln) at the wobble position. ATP is required to activate the C2 atom of the wobble base. The chain is Mitochondrial tRNA-specific 2-thiouridylase 1 from Drosophila melanogaster (Fruit fly).